Consider the following 189-residue polypeptide: MAMAAAASLLPACAAPTLPGRAFRPRRNSTPTASLSCDGGSRGRGVGLGVILGGGRAQGVRRNAAAETYVPGSGKYIAPDYLVKKVTAKELEELVRGERKVPLIVDFYATWCGPCVLMAQDIEMLAVEYENNALFVKVDTDDEYELARDMQVRGLPTLYFFSPDQSKDALRTEGLIPIDMIRNIIDNEL.

The transit peptide at 1-36 (MAMAAAASLLPACAAPTLPGRAFRPRRNSTPTASLS) directs the protein to the chloroplast. The Thioredoxin domain maps to 72–189 (GSGKYIAPDY…MIRNIIDNEL (118 aa)). Residues C112 and C115 each act as nucleophile in the active site. C112 and C115 form a disulfide bridge.

This sequence belongs to the thioredoxin family. Plant CITRX-type subfamily.

Its subcellular location is the plastid. It is found in the chloroplast. Functionally, probable thiol-disulfide oxidoreductase that may play a role in proper chloroplast development. The chain is Thioredoxin-like protein CITRX, chloroplastic from Oryza sativa subsp. indica (Rice).